Consider the following 250-residue polypeptide: Entry-fusion complex associated protein OPG095 (250 aa).

The N-myristoyl glycine; by host moiety is linked to residue glycine 2. The targeting to MV membrane stretch occupies residues 2-12 (GAAASIQTTVN). The Virion surface segment spans residues 2-183 (GAAASIQTTV…IAPRQVAGTG (182 aa)). 3 disulfides stabilise this stretch: cysteine 34–cysteine 57, cysteine 49–cysteine 136, and cysteine 116–cysteine 158. Residues 184 to 204 (VQFYMIVIGVIILAALFMYYA) traverse the membrane as a helical segment. The Intravirion portion of the chain corresponds to 205–250 (KRMLFTSTNDKIKLILANKENVHWTTYMDTFFRTSPMIIATTDIQN).

This sequence belongs to the orthopoxvirus OPG095 family. In terms of assembly, component of the entry fusion complex (EFC) composed of OPG053, OPG076, OPG086, OPG094, OPG095, OPG099, OPG107, OPG143, OPG104, OPG147 and OPG155. Except for OPG095 and OPG053, each of the EFC proteins is required for assembly or stability of the complex. In terms of processing, myristoylated. Disulfid bonds are oxidized in the cytoplasm by OPG088 protein. Post-translationally, unglycosylated because produced in viral factories instead of the classic ER -Golgi route.

The protein localises to the virion membrane. Functionally, component of the entry fusion complex (EFC), which consists of 11 proteins. During cell infection, this complex mediates entry of the virion core into the host cytoplasm by a two-step mechanism consisting of lipid mixing of the viral and cellular membranes and subsequent pore formation. The sequence is that of Entry-fusion complex associated protein OPG095 (OPG099) from Monkeypox virus.